The primary structure comprises 367 residues: Zinc metalloproteinase nas-22 (367 aa).

Positions 1 to 16 are cleaved as a signal peptide; sequence MKSFFILLSILQECYG. Residues 41–237 form the Peptidase M12A domain; the sequence is VLIRGSDEER…LMINKYYECS (197 aa). Asn-56 and Asn-85 each carry an N-linked (GlcNAc...) asparagine glycan. 4 disulfide bridges follow: Cys-88/Cys-236, Cys-111/Cys-130, Cys-238/Cys-258, and Cys-260/Cys-269. A Zn(2+)-binding site is contributed by His-138. Glu-139 is a catalytic residue. Positions 142 and 148 each coordinate Zn(2+). N-linked (GlcNAc...) asparagine glycosylation is found at Asn-169, Asn-241, and Asn-254. An EGF-like domain is found at 232 to 270; that stretch reads KYYECSCANNLSCKNHGYPNPSNCSQCNCPYGFGGADCS. N-linked (GlcNAc...) asparagine glycosylation is found at Asn-287 and Asn-322.

Zn(2+) is required as a cofactor. As to expression, expressed in uterine seam (utse) cell.

It localises to the secreted. Metalloprotease. The sequence is that of Zinc metalloproteinase nas-22 (nas-22) from Caenorhabditis elegans.